The following is a 429-amino-acid chain: Forkhead box protein P3 (429 aa).

The disordered stretch occupies residues Met1 to Gln67. Ser19 is subject to Phosphoserine; by CDK2. At Lys31 the chain carries N6-acetyllysine. A compositionally biased stretch (low complexity) spans Thr56–Gln67. A Nuclear export signal motif is present at residues Gln67–Leu75. Residues Leu91–Leu95 carry the LXXLL motif motif. The tract at residues Leu105–Ser189 is essential for transcriptional repressor activity and for interaction with KAT5 and HDAC7. Residues Leu148–Cys198 form an interaction with IKZF4 region. Residue Thr175 is modified to Phosphothreonine; by CDK2. Residues Gly196 to His221 form a C2H2-type zinc finger. The Nuclear export signal signature appears at Val238–Leu247. The segment at Val238–Leu259 is leucine-zipper. Glycyl lysine isopeptide (Lys-Gly) (interchain with G-Cter in ubiquitin) cross-links involve residues Lys249 and Lys251. N6-acetyllysine; alternate occurs at positions 262 and 267. Glycyl lysine isopeptide (Lys-Gly) (interchain with G-Cter in ubiquitin); alternate cross-links involve residues Lys262 and Lys267. The interaction with RUNX1 stretch occupies residues Ser277 to Met336. The segment at residues Arg337–Lys423 is a DNA-binding region (fork-head). Residue Lys393 forms a Glycyl lysine isopeptide (Lys-Gly) (interchain with G-Cter in ubiquitin) linkage. The Nuclear localization signal motif lies at Arg414–Arg417. A Phosphoserine modification is found at Ser418. A propeptide spanning residues Ser418–Pro429 is cleaved from the precursor.

As to quaternary structure, homodimer. Dimerization is essential for its transcriptional regulator activity. Interacts with IKZF3. Interacts (via LXXLL motif) with isoform 4 of RORA (via AF-2 motif). Interacts with STUB1 and HSPA1A/B. Interacts with IKZF4, HDAC7 and KAT5. Interacts with RUNX1, RUNX2, RUNX3 and NFATC2. Interacts with RORC. Interacts with HDAC9 in the absence of T-cell stimulation. Interacts with RELA, PPP1CA, PPP1CB, PPP1CG, HSPA8 and USP7. Post-translationally, acetylation on lysine residues stabilizes FOXP3 and promotes differentiation of T-cells into induced regulatory T-cells (iTregs) associated with suppressive functions. Acetylation is mediated by a coordinated action of KAT5 and EP300/p300 acetyltransferases: EP300/p300 is required to enhance KAT5 autoacetylation, promoting acetylation of FOXP3 by KAT5. Deacetylated by SIRT1. In terms of processing, polyubiquitinated, leading to its proteasomal degradation in regulatory T-cells (Treg) which is mediated by STUB1 in a HSPA1A/B-dependent manner. Deubiquitinated by USP7 and USP44 leading to increase in protein stability. Phosphorylation at Ser-418 regulates its transcriptional repressor activity and consequently, regulatory T-cells (Treg) suppressive function. Phosphorylation by CDK2 negatively regulates its transcriptional activity and protein stability. Post-translationally, undergoes proteolytic cleavage in activated regulatory T-cells (Treg), and can be cleaved at either the N- or C-terminal site, or at both sites. Treg expressing the form cleaved at C-terminal site or both N- and C-terminal sites exhibit an increased induction of IL10 and an increased capacity to suppress proliferation of conventional T-cells in vitro. Treg expressing the form cleaved at only the C-terminal site are highly effective at preventing experimental colitis in an in vivo model of inflammatory bowel disease. As to expression, high level of expression in thymus and spleen.

The protein resides in the nucleus. It localises to the cytoplasm. Its function is as follows. Transcriptional regulator which is crucial for the development and inhibitory function of regulatory T-cells (Treg). Plays an essential role in maintaining homeostasis of the immune system by allowing the acquisition of full suppressive function and stability of the Treg lineage, and by directly modulating the expansion and function of conventional T-cells. Can act either as a transcriptional repressor or a transcriptional activator depending on its interactions with other transcription factors, histone acetylases and deacetylases. The suppressive activity of Treg involves the coordinate activation of many genes, including CTLA4 and TNFRSF18 by FOXP3 along with repression of genes encoding cytokines such as interleukin-2 (IL2) and interferon-gamma (IFNG). Inhibits cytokine production and T-cell effector function by repressing the activity of two key transcription factors, RELA and NFATC2. Mediates transcriptional repression of IL2 via its association with histone acetylase KAT5 and histone deacetylase HDAC7. Can activate the expression of TNFRSF18, IL2RA and CTLA4 and repress the expression of IL2 and IFNG via its association with transcription factor RUNX1. Inhibits the differentiation of IL17 producing helper T-cells (Th17) by antagonizing RORC function, leading to down-regulation of IL17 expression, favoring Treg development. Inhibits the transcriptional activator activity of RORA. Can repress the expression of IL2 and IFNG via its association with transcription factor IKZF4. The protein is Forkhead box protein P3 (Foxp3) of Mus musculus (Mouse).